An 83-amino-acid polypeptide reads, in one-letter code: Small ribosomal subunit protein bS16 (83 aa).

This sequence belongs to the bacterial ribosomal protein bS16 family.

This is Small ribosomal subunit protein bS16 from Pseudomonas aeruginosa (strain LESB58).